Reading from the N-terminus, the 898-residue chain is Chloride channel protein 2 (898 aa).

Residues 1–90 (MAAPAAAAVE…RCHKFLVSRV (90 aa)) lie on the Cytoplasmic side of the membrane. Residues 19 to 37 (QYEQTLMYGRYTQDLGAFA) form an essential for channel gating by both voltage and cell volume region. Position 23 is a phosphothreonine (Thr23). The segment at 39-52 (EEAARIRLGGPEPW) is modulates channel gating by both voltage and cell volume. A run of 2 helical transmembrane segments spans residues 91-124 (GEDW…AQQW) and 133-158 (LLLQ…TQIL). Positions 164–168 (GSGIP) match the Selectivity filter part_1 motif. The segment at residues 167 to 174 (IPEMKTIL) is an intramembrane region (helical). 2 consecutive transmembrane segments (helical) span residues 183-201 (LTLK…ALGS) and 208-226 (EGPF…SKFL). A Selectivity filter part_2 motif is present at residues 206–210 (GKEGP). 2 intramembrane regions (helical) span residues 242–254 (MLAA…VGCC) and 258–266 (PIGGVLFSI). 5 consecutive transmembrane segments (helical) span residues 278-298 (YWRG…LAVW), 324-352 (LPAF…VQVM), 361-380 (FLMR…ISTL), 432-452 (ANVF…SALA), and 460-483 (GAFM…MAAW). The Selectivity filter part_3 signature appears at 460 to 464 (GAFMP). Residues 500-514 (GGYAVVGAAALAGAV) constitute an intramembrane region (helical). The note=Loop between two helices intramembrane region spans 515–516 (TH). Residues 517-528 (TVSTAVIVFELT) constitute an intramembrane region (helical). Positions 529–533 (GQIAH) form an intramembrane region, note=Loop between two helices. Residues 534–551 (ILPVMIAVILANAVAQSL) traverse the membrane as a helical segment. Residues 552–898 (QPSLYDSIIR…SPSDSDDKCQ (347 aa)) lie on the Cytoplasmic side of the membrane. Residues 587 to 645 (MVRDVPHVALSCTFRDLRLALHRTKGRTLALVESPESMILLGSIERTQVVALLAAQLSP) form the CBS 1 domain. Residues 647–658 (RRRQSKQKRRVA) show a composition bias toward basic residues. The tract at residues 647–675 (RRRQSKQKRRVAHTSPPSCQESPPSPETS) is disordered. At Ser710 the chain carries Phosphoserine. Residues 726–766 (FCGSPPPEAASESEKSESSEKRKSKRVRISLASDSDLEGEM) form a disordered region. Basic and acidic residues predominate over residues 737–746 (ESEKSESSEK). At Ser758 the chain carries Phosphoserine. One can recognise a CBS 2 domain in the interval 790–850 (IDPAPFQLVE…GSVTAQGVKV (61 aa)). Positions 812 to 813 (LL) match the Basolateral membrane sorting motif. Residues 856–898 (SFRDSATSSSDTETTEVHALWGPRSRHGLPREGSPSDSDDKCQ) form a disordered region.

This sequence belongs to the chloride channel (TC 2.A.49) family. ClC-2/CLCN2 subfamily. In terms of assembly, homodimer. Interacts with auxiliary subunit HEPACAM. Post-translationally, phosphorylated. Activated by dephosphorylation. In terms of tissue distribution, ubiquitously expressed.

It is found in the cell membrane. The protein localises to the basolateral cell membrane. It localises to the cell projection. Its subcellular location is the dendritic spine membrane. The protein resides in the axon. It carries out the reaction chloride(in) = chloride(out). The enzyme catalyses thiocyanate(in) = thiocyanate(out). It catalyses the reaction bromide(in) = bromide(out). The catalysed reaction is nitrate(in) = nitrate(out). It carries out the reaction iodide(out) = iodide(in). Common gate kinetics are down-regulated by intracellular ATP. Inhibited by AK-42, a derivative of meclofenamate. Inhibited by Cd(2+). Inhibited by Zn(2+) and PKC activation. Inhibited at acidic pH. CCLN2:HEPACAM channel conductance is up-regulated upon hypo-osmolarity. In terms of biological role, voltage-gated and osmosensitive chloride channel. Forms a homodimeric channel where each subunit has its own ion conduction pathway. Conducts double-barreled currents controlled by two types of gates, two fast glutamate gates that control each subunit independently and a slow common gate that opens and shuts off both subunits simultaneously. Displays inward rectification currents activated upon membrane hyperpolarization and extracellular hypotonicity. Contributes to chloride conductance involved in neuron excitability. In hippocampal neurons, generates a significant part of resting membrane conductance and provides an additional chloride efflux pathway to prevent chloride accumulation in dendrites upon GABA receptor activation. In glia, associates with the auxiliary subunit HEPACAM/GlialCAM at astrocytic processes and myelinated fiber tracts where it may regulate transcellular chloride flux buffering extracellular chloride and potassium concentrations. Regulates aldosterone production in adrenal glands. The opening of CLCN2 channels at hyperpolarized membrane potentials in the glomerulosa causes cell membrane depolarization, activation of voltage-gated calcium channels and increased expression of aldosterone synthase, the rate-limiting enzyme for aldosterone biosynthesis. Contributes to chloride conductance in retinal pigment epithelium involved in phagocytosis of shed photoreceptor outer segments and photoreceptor renewal. Conducts chloride currents at the basolateral membrane of epithelial cells with a role in chloride reabsorption rather than secretion. Permeable to small monovalent anions with chloride &gt; thiocyanate &gt; bromide &gt; nitrate &gt; iodide ion selectivity. This chain is Chloride channel protein 2 (CLCN2), found in Oryctolagus cuniculus (Rabbit).